The following is a 343-amino-acid chain: SH2 domain-containing adapter protein D (343 aa).

A disordered region spans residues 1-176; sequence MAKWLRDYLN…PADEYDQPWE (176 aa). Composition is skewed to basic and acidic residues over residues 29 to 40 and 73 to 82; these read DILRAYREQKDL and IKVEAADMAR. Acidic residues predominate over residues 92–102; it reads EEPEAETEYSD. The span at 160–176 shows a compositional bias: basic and acidic residues; the sequence is RPLEDERPADEYDQPWE. Residues 225–320 form the SH2 domain; that stretch reads WFHGPLSRAE…AEHLALLYPV (96 aa). The interval 322–343 is disordered; sequence SSQSSQGPCTLAAKPERGQGDP.

Post-translationally, tyrosine phosphorylated by ABL. As to expression, specifically expressed in brain.

In terms of biological role, may function as an adapter protein. The polypeptide is SH2 domain-containing adapter protein D (Shd) (Mus musculus (Mouse)).